The chain runs to 224 residues: Propanediol dehydratase medium subunit (224 aa).

Positions 1–18 (MEINEKLLRQIIEDVLSE) are targets protein to the BMC.

It belongs to the diol/glycerol dehydratase medium subunit family. As to quaternary structure, the propanediol dehydratase enzyme is a heterotrimeric complex composed of a large (PduC), a medium (PduD) and a small (PduE) subunit. Adenosylcob(III)alamin serves as cofactor.

It is found in the bacterial microcompartment. The enzyme catalyses propane-1,2-diol = propanal + H2O. It functions in the pathway polyol metabolism; 1,2-propanediol degradation. Functionally, part of the PduCDE complex that catalyzes the dehydration of 1,2-propanediol (1,2-PD) to propionaldehyde. This subunit is directly targeted to the bacterial microcompartment (BMC). Expression of a cosmid containing the full 21-gene pdu operon in E.coli allows E.coli to grow on 1,2-propanediol (1,2-PD) with the appearance of BMCs in its cytoplasm. In terms of biological role, the 1,2-PD-specific bacterial microcompartment (BMC) concentrates low levels of 1,2-PD catabolic enzymes, concentrates volatile reaction intermediates thus enhancing pathway flux and keeps the level of toxic, mutagenic propionaldehyde low. This is Propanediol dehydratase medium subunit from Citrobacter freundii.